A 248-amino-acid chain; its full sequence is Proteasome subunit alpha type-1 (248 aa).

The protein belongs to the peptidase T1A family. The 26S proteasome consists of a 20S proteasome core and two 19S regulatory subunits. The 20S proteasome core is composed of 28 subunits that are arranged in four stacked rings, resulting in a barrel-shaped structure. The two end rings are each formed by seven alpha subunits, and the two central rings are each formed by seven beta subunits. The catalytic chamber with the active sites is on the inside of the barrel.

It localises to the cytoplasm. It is found in the nucleus. Its function is as follows. The proteasome is a multicatalytic proteinase complex which is characterized by its ability to cleave peptides with Arg, Phe, Tyr, Leu, and Glu adjacent to the leaving group at neutral or slightly basic pH. The proteasome has an ATP-dependent proteolytic activity. This Dictyostelium discoideum (Social amoeba) protein is Proteasome subunit alpha type-1 (psmA1).